Here is a 568-residue protein sequence, read N- to C-terminus: Cytochrome P450 monooxygenase 41 (568 aa).

A helical transmembrane segment spans residues 21-41 (LTSLVPLILSVMVCLIATVTI). 2 N-linked (GlcNAc...) asparagine glycosylation sites follow: Asn-321 and Asn-377. Cys-514 contributes to the heme binding site.

It belongs to the cytochrome P450 family. The cofactor is heme.

Its subcellular location is the membrane. The protein operates within secondary metabolite biosynthesis. Cytochrome P450 monooxygenase that is able to use 3,5-dimethoxy-trans-stilbene and 3,5,4'-trimethoxy-trans-stilbene as substrates for oxidation. In Postia placenta (strain ATCC 44394 / Madison 698-R) (Brown rot fungus), this protein is Cytochrome P450 monooxygenase 41.